A 178-amino-acid chain; its full sequence is SPbeta prophage-derived uncharacterized protein YonC (178 aa).

The protein is SPbeta prophage-derived uncharacterized protein YonC (yonC) of Bacillus subtilis (strain 168).